The chain runs to 331 residues: Holliday junction branch migration complex subunit RuvB (331 aa).

Positions 4 to 182 (KDILQSSECI…FGIPMHLEFY (179 aa)) are large ATPase domain (RuvB-L). ATP contacts are provided by residues arginine 22, glycine 63, lysine 66, threonine 67, threonine 68, 129–131 (EDF), arginine 172, tyrosine 182, and arginine 219. Residue threonine 67 coordinates Mg(2+). The small ATPAse domain (RuvB-S) stretch occupies residues 183-253 (STEELTKVIK…FADQALLRLG (71 aa)). The segment at 256–331 (KLGLDRQDIK…SYLNEQTYNM (76 aa)) is head domain (RuvB-H). Residues arginine 309 and arginine 314 each coordinate DNA.

The protein belongs to the RuvB family. In terms of assembly, homohexamer. Forms an RuvA(8)-RuvB(12)-Holliday junction (HJ) complex. HJ DNA is sandwiched between 2 RuvA tetramers; dsDNA enters through RuvA and exits via RuvB. An RuvB hexamer assembles on each DNA strand where it exits the tetramer. Each RuvB hexamer is contacted by two RuvA subunits (via domain III) on 2 adjacent RuvB subunits; this complex drives branch migration. In the full resolvosome a probable DNA-RuvA(4)-RuvB(12)-RuvC(2) complex forms which resolves the HJ.

It localises to the cytoplasm. It catalyses the reaction ATP + H2O = ADP + phosphate + H(+). Functionally, the RuvA-RuvB-RuvC complex processes Holliday junction (HJ) DNA during genetic recombination and DNA repair, while the RuvA-RuvB complex plays an important role in the rescue of blocked DNA replication forks via replication fork reversal (RFR). RuvA specifically binds to HJ cruciform DNA, conferring on it an open structure. The RuvB hexamer acts as an ATP-dependent pump, pulling dsDNA into and through the RuvAB complex. RuvB forms 2 homohexamers on either side of HJ DNA bound by 1 or 2 RuvA tetramers; 4 subunits per hexamer contact DNA at a time. Coordinated motions by a converter formed by DNA-disengaged RuvB subunits stimulates ATP hydrolysis and nucleotide exchange. Immobilization of the converter enables RuvB to convert the ATP-contained energy into a lever motion, pulling 2 nucleotides of DNA out of the RuvA tetramer per ATP hydrolyzed, thus driving DNA branch migration. The RuvB motors rotate together with the DNA substrate, which together with the progressing nucleotide cycle form the mechanistic basis for DNA recombination by continuous HJ branch migration. Branch migration allows RuvC to scan DNA until it finds its consensus sequence, where it cleaves and resolves cruciform DNA. The protein is Holliday junction branch migration complex subunit RuvB of Ehrlichia ruminantium (strain Gardel).